A 2324-amino-acid chain; its full sequence is Acetyl-CoA carboxylase (2324 aa).

Methionine 1 carries the N-acetylmethionine modification. A disordered region spans residues 1–34 (MEESSQPAKPLEMNPHSRFIIGSVSEDNSEDETS). Phosphoserine is present on residues serine 78 and serine 80. A Biotin carboxylation domain is found at 117 to 618 (VIEKVLIANN…DTGWLDRLIA (502 aa)). The ATP-grasp domain occupies 275–466 (QKRILNVPQE…LPAAQLQIAM (192 aa)). Residue 315–320 (GGGGKG) participates in ATP binding. Residues glutamate 424, glutamate 437, and asparagine 439 each coordinate Mn(2+). Arginine 441 is a catalytic residue. A Biotinyl-binding domain is found at 745–819 (FEKENDPSIL…DPGCVIAKLQ (75 aa)). The residue at position 786 (lysine 786) is an N6-biotinyllysine. Serine 1193 carries the post-translational modification Phosphoserine. The CoA carboxyltransferase N-terminal domain maps to 1553–1891 (PYVTKDLLQS…SVYSPVPILK (339 aa)). Residues 1553–2211 (PYVTKDLLQS…EDVVKKKIHD (659 aa)) are carboxyltransferase. CoA contacts are provided by arginine 1800, lysine 2104, and arginine 2106. One can recognise a CoA carboxyltransferase C-terminal domain in the interval 1895 to 2211 (PIDRTIDFVP…EDVVKKKIHD (317 aa)).

Biotin serves as cofactor. The cofactor is Mn(2+).

Its subcellular location is the cytoplasm. The enzyme catalyses hydrogencarbonate + acetyl-CoA + ATP = malonyl-CoA + ADP + phosphate + H(+). The catalysed reaction is N(6)-biotinyl-L-lysyl-[protein] + hydrogencarbonate + ATP = N(6)-carboxybiotinyl-L-lysyl-[protein] + ADP + phosphate + H(+). Its pathway is lipid metabolism; malonyl-CoA biosynthesis; malonyl-CoA from acetyl-CoA: step 1/1. By phosphorylation. In terms of biological role, catalyzes the rate-limiting reaction in the biogenesis of long-chain fatty acids. Carries out three functions: biotin carboxyl carrier protein, biotin carboxylase and carboxyltransferase. The polypeptide is Acetyl-CoA carboxylase (ACAC) (Gallus gallus (Chicken)).